The primary structure comprises 89 residues: HssA/B-like protein 22 (89 aa).

This sequence belongs to the hssA/B family.

This chain is HssA/B-like protein 22 (hssl22), found in Dictyostelium discoideum (Social amoeba).